The chain runs to 538 residues: Phosphoenolpyruvate carboxykinase (ATP) (538 aa).

Arg-61, Tyr-195, and Lys-201 together coordinate substrate. Residues Lys-201, His-220, and 236–244 (GLSGTGKTT) each bind ATP. Lys-201 and His-220 together coordinate Mn(2+). Asp-257 is a Mn(2+) binding site. ATP is bound by residues Glu-285, Arg-323, and Thr-449. Residue Arg-323 participates in substrate binding.

It belongs to the phosphoenolpyruvate carboxykinase (ATP) family. The cofactor is Mn(2+).

The protein resides in the cytoplasm. The catalysed reaction is oxaloacetate + ATP = phosphoenolpyruvate + ADP + CO2. It functions in the pathway carbohydrate biosynthesis; gluconeogenesis. Its function is as follows. Involved in the gluconeogenesis. Catalyzes the conversion of oxaloacetate (OAA) to phosphoenolpyruvate (PEP) through direct phosphoryl transfer between the nucleoside triphosphate and OAA. This Nitrobacter winogradskyi (strain ATCC 25391 / DSM 10237 / CIP 104748 / NCIMB 11846 / Nb-255) protein is Phosphoenolpyruvate carboxykinase (ATP).